Consider the following 188-residue polypeptide: Elongation factor P (188 aa).

This sequence belongs to the elongation factor P family.

It is found in the cytoplasm. Its pathway is protein biosynthesis; polypeptide chain elongation. In terms of biological role, involved in peptide bond synthesis. Stimulates efficient translation and peptide-bond synthesis on native or reconstituted 70S ribosomes in vitro. Probably functions indirectly by altering the affinity of the ribosome for aminoacyl-tRNA, thus increasing their reactivity as acceptors for peptidyl transferase. This is Elongation factor P from Leptospira interrogans serogroup Icterohaemorrhagiae serovar copenhageni (strain Fiocruz L1-130).